Consider the following 187-residue polypeptide: Ribose 1,5-bisphosphate phosphokinase PhnN (187 aa).

9–16 (GPSGSGKD) lines the ATP pocket.

Belongs to the ribose 1,5-bisphosphokinase family.

The enzyme catalyses alpha-D-ribose 1,5-bisphosphate + ATP = 5-phospho-alpha-D-ribose 1-diphosphate + ADP. It participates in metabolic intermediate biosynthesis; 5-phospho-alpha-D-ribose 1-diphosphate biosynthesis; 5-phospho-alpha-D-ribose 1-diphosphate from D-ribose 5-phosphate (route II): step 3/3. Its function is as follows. Catalyzes the phosphorylation of ribose 1,5-bisphosphate to 5-phospho-D-ribosyl alpha-1-diphosphate (PRPP). This is Ribose 1,5-bisphosphate phosphokinase PhnN from Desulfomicrobium baculatum (strain DSM 4028 / VKM B-1378 / X) (Desulfovibrio baculatus).